Consider the following 175-residue polypeptide: Large ribosomal subunit protein uL10 (175 aa).

This sequence belongs to the universal ribosomal protein uL10 family. As to quaternary structure, part of the ribosomal stalk of the 50S ribosomal subunit. The N-terminus interacts with L11 and the large rRNA to form the base of the stalk. The C-terminus forms an elongated spine to which L12 dimers bind in a sequential fashion forming a multimeric L10(L12)X complex.

Its function is as follows. Forms part of the ribosomal stalk, playing a central role in the interaction of the ribosome with GTP-bound translation factors. This chain is Large ribosomal subunit protein uL10, found in Synechococcus sp. (strain WH7803).